Here is a 641-residue protein sequence, read N- to C-terminus: Sodium-dependent nutrient amino acid transporter 1 (641 aa).

The segment covering 1 to 21 (MELKNIEQQPQLQNGNGTATE) has biased composition (polar residues). A disordered region spans residues 1–37 (MELKNIEQQPQLQNGNGTATENNEKGEQKPTEGGERT). Over 1–38 (MELKNIEQQPQLQNGNGTATENNEKGEQKPTEGGERTN) the chain is Cytoplasmic. The span at 22-35 (NNEKGEQKPTEGGE) shows a compositional bias: basic and acidic residues. 3 consecutive transmembrane segments (helical) span residues 39–59 (WGNG…LGNV), 72–92 (GAFL…MYYL), and 125–145 (TVCI…YLFV). Asn-181, Asn-190, and Asn-198 each carry an N-linked (GlcNAc...) asparagine glycan. Helical transmembrane passes span 229–249 (PDWK…LVIM), 258–278 (AAYF…GRAV), 307–327 (AVVQ…MFAS), 341–361 (IVTT…FAIL), 401–421 (LFSV…IVAL), 441–461 (VALV…TPGG), 474–494 (TYVV…IYGL), 516–536 (CWSF…MATI), and 552–572 (IAGW…GIWY).

This sequence belongs to the sodium:neurotransmitter symporter (SNF) (TC 2.A.22) family.

The protein resides in the membrane. Unusual broad substrate spectrum amino acid:sodium cotransporter that promotes absorption of the D isomers of essential amino acids. Neutral amino acids are the preferred substrates, especially methionine and phenylalanine. This is Sodium-dependent nutrient amino acid transporter 1 from Drosophila willistoni (Fruit fly).